Consider the following 353-residue polypeptide: MSEPLKPRIDFAEPLKEEPTSAFKAQQTFSEAESRTFAPAAIDERPEDEGVAEAAVDAALRPKRSLWRKMVMGGLALFGASVVGQGIQWTMNAWQTQDWVALGGCAAGALIVGAGVGSVVTEWRRLWRLRQRAHERDEARELLHSHSVGKGRAFCEKLAQQAGIDQSHPALQRWYAAIHETQNDREIVGLYAHLVQPVLDAQARREISRFAAESTLMIAVSPLALVDMAFIAWRNLRLINRIATLYGIELGYYSRLRLFRLVLLNIAFAGASELVREVGMDWMSQDLAARLSTRAAQGIGAGLLTARLGIKAMELCRPLPWIDNDKPRLGDFRRQLIGQLKETLQKSKSSPEK.

Residues 1–19 show a composition bias toward basic and acidic residues; the sequence is MSEPLKPRIDFAEPLKEEP. Positions 1–35 are disordered; the sequence is MSEPLKPRIDFAEPLKEEPTSAFKAQQTFSEAESR. Transmembrane regions (helical) follow at residues 70-90, 100-120, and 213-233; these read MVMG…IQWT, VALG…GSVV, and ESTL…FIAW.

The protein belongs to the UPF0283 family.

It is found in the cell inner membrane. This chain is UPF0283 membrane protein YcjF, found in Salmonella agona (strain SL483).